A 326-amino-acid polypeptide reads, in one-letter code: Ras association domain-containing protein 2 (326 aa).

A disordered region spans residues 111-133 (EVDAPPEGDQMPSSTDSRGLKPL). The region spanning 176-264 (YNHKTSVFTP…SKVFLMEKDQ (89 aa)) is the Ras-associating domain. The region spanning 272 to 319 (VAQYIKFEMPVLKSFIQKLQEEEDREVKKLMRKYTVLRLMIRQRLEEI) is the SARAH domain.

As to quaternary structure, interacts directly with activated KRAS in a GTP-dependent manner. Interacts (via SARAH domain) with STK3/MST2 and STK4/MST1. Phosphorylated by STK3/MST2 and STK4/MST1. In terms of tissue distribution, widely expressed with highest levels in brain, placenta, peripheral blood and lung. Frequently down-regulated in lung tumor cell lines.

It localises to the nucleus. The protein resides in the cytoplasm. The protein localises to the chromosome. It is found in the centromere. Its subcellular location is the kinetochore. Its function is as follows. Potential tumor suppressor. Acts as a KRAS-specific effector protein. May promote apoptosis and cell cycle arrest. Stabilizes STK3/MST2 by protecting it from proteasomal degradation. In Homo sapiens (Human), this protein is Ras association domain-containing protein 2 (RASSF2).